Reading from the N-terminus, the 82-residue chain is MHPPSITQLLIILLIIVLLFGAKKIPELAKGLGSGIKNFKKAVKEDEEDNQSEENTKSQIKQSESKNENVSKTHTDSQKQDT.

Residues 1-21 form a helical membrane-spanning segment; that stretch reads MHPPSITQLLIILLIIVLLFG. Residues 42–82 form a disordered region; the sequence is AVKEDEEDNQSEENTKSQIKQSESKNENVSKTHTDSQKQDT. The segment covering 63-82 has biased composition (basic and acidic residues); sequence SESKNENVSKTHTDSQKQDT.

This sequence belongs to the TatA/E family. In terms of assembly, the Tat system comprises two distinct complexes: a TatABC complex, containing multiple copies of TatA, TatB and TatC subunits, and a separate TatA complex, containing only TatA subunits. Substrates initially bind to the TatABC complex, which probably triggers association of the separate TatA complex to form the active translocon.

Its subcellular location is the cell inner membrane. Part of the twin-arginine translocation (Tat) system that transports large folded proteins containing a characteristic twin-arginine motif in their signal peptide across membranes. TatA could form the protein-conducting channel of the Tat system. The chain is Sec-independent protein translocase protein TatA from Helicobacter hepaticus (strain ATCC 51449 / 3B1).